The chain runs to 833 residues: Interleukin enhancer-binding factor 3 homolog (833 aa).

Positions 11-379 (RIFVNDDRHV…PMKRPIEEES (369 aa)) constitute a DZF domain. Disordered stretches follow at residues 65–86 (VNALDTDGEGDKETEPSTGEQA) and 339–403 (DPLP…KAEP). Thr70 is modified (phosphothreonine). Residues 373-385 (RPIEEESTDEKNP) are compositionally biased toward basic and acidic residues. DRBM domains are found at residues 402-471 (EPAQ…DMGL) and 527-593 (HGKN…KLFP). Disordered stretches follow at residues 597–651 (NSEV…FNQG), 702–762 (QSDS…GGGA), and 775–833 (AYPS…YQYR). Residues 629 to 639 (GRGRGRGRGRG) show a composition bias toward basic residues. The segment covering 640-651 (RGFNNGGGFNQG) has biased composition (gly residues). Residues 775–818 (AYPSQVTGGQEYNYEGYSNQSNYNSQGGANQNFGGNSAPYNSGQ) are compositionally biased toward polar residues.

It localises to the nucleus. The protein localises to the nucleolus. The protein resides in the cytoplasm. Functionally, RNA-binding protein that plays an essential role in the biogenesis of circular RNAs (circRNAs) which are produced by back-splicing circularization of pre-mRNAs. Within the nucleus, promotes circRNAs processing by stabilizing the regulatory elements residing in the flanking introns of the circularized exons. Plays thereby a role in the back-splicing of a subset of circRNAs. As a consequence, participates in a wide range of transcriptional and post-transcriptional processes. Binds to poly-U elements and AU-rich elements (AREs) in the 3'-UTR of target mRNAs. Upon viral infection, ILF3 accumulates in the cytoplasm and participates in the innate antiviral response. Mechanistically, ILF3 becomes phosphorylated and activated by the double-stranded RNA-activated protein kinase/PKR which releases ILF3 from cellular mature circRNAs. In turn, unbound ILF3 molecules are able to interact with and thus inhibit viral mRNAs. The polypeptide is Interleukin enhancer-binding factor 3 homolog (ilf3) (Danio rerio (Zebrafish)).